Consider the following 41-residue polypeptide: Photosystem I reaction center subunit IX (41 aa).

Residues 7–27 (YLSTAPVIALAWMSFTAGLLI) form a helical membrane-spanning segment.

This sequence belongs to the PsaJ family.

It localises to the plastid. The protein localises to the chloroplast thylakoid membrane. May help in the organization of the PsaE and PsaF subunits. The sequence is that of Photosystem I reaction center subunit IX from Tupiella akineta (Green alga).